The chain runs to 311 residues: Telomere-binding protein I1 homolog (311 aa).

It belongs to the chordopoxvirinae I1 family.

It localises to the virion. In terms of biological role, late DNA-binding protein which binds to the hairpin form of the viral telomeric sequence. Required for the production of mature virions (MV). The chain is Telomere-binding protein I1 homolog from Fowlpox virus (strain NVSL) (FPV).